The chain runs to 151 residues: Protein SprT-like (151 aa).

One can recognise a SprT-like domain in the interval 7-146 (QSLTESIAIK…CGRCGGILKL (140 aa)). His-67 contributes to the Zn(2+) binding site. Glu-68 is an active-site residue. His-71 lines the Zn(2+) pocket.

It belongs to the SprT family. Requires Zn(2+) as cofactor.

It localises to the cytoplasm. The sequence is that of Protein SprT-like from Staphylococcus epidermidis (strain ATCC 35984 / DSM 28319 / BCRC 17069 / CCUG 31568 / BM 3577 / RP62A).